Reading from the N-terminus, the 430-residue chain is Asparagine--tRNA ligase (430 aa).

Belongs to the class-II aminoacyl-tRNA synthetase family. Homodimer.

The protein resides in the cytoplasm. It carries out the reaction tRNA(Asn) + L-asparagine + ATP = L-asparaginyl-tRNA(Asn) + AMP + diphosphate + H(+). This chain is Asparagine--tRNA ligase, found in Listeria monocytogenes serovar 1/2a (strain ATCC BAA-679 / EGD-e).